Here is a 341-residue protein sequence, read N- to C-terminus: KH domain-containing RNA-binding protein QKI (341 aa).

A qua1 domain; involved in homodimerization region spans residues 11–82 (PNPTPDYLMQ…PDAVGPIVQL (72 aa)). One can recognise a KH domain in the interval 87–153 (YVPVKEYPDF…WEHLNEDLHV (67 aa)). Residues 182–213 (AAEGEDSLKKMQLMELAILNGTYRDANIKSPA) form a qua2 domain; involved in RNA binding region. Ser-188 bears the Phosphoserine mark. Arg-227 carries the omega-N-methylarginine modification. Arg-242 carries the asymmetric dimethylarginine; by CARM1; alternate modification. Omega-N-methylarginine; alternate is present on Arg-242. The residue at position 256 (Arg-256) is an Omega-N-methylarginine. The SH3-binding signature appears at 276–279 (PPGP). The Nuclear localization signal motif lies at 324 to 330 (RVHPYQR).

The protein belongs to the quaking family. In terms of assembly, homodimer; does not require RNA to homodimerize. Able to heterodimerize with BICC1. Methylated by PRMT1. In terms of processing, tyrosine phosphorylated at its C-terminus, probably by FYN. Phosphorylation leads to decreased mRNA-binding affinity, affecting transport and/or stabilization of MBP mRNA. Post-translationally, ubiquitinated by RNF6 in macrophages, leading to its degradation. Present in myelinating oligodendrocytes (at protein level).

It localises to the nucleus. The protein resides in the cytoplasm. Functionally, RNA reader protein, which recognizes and binds specific RNAs, thereby regulating RNA metabolic processes, such as pre-mRNA splicing, circular RNA (circRNA) formation, mRNA export, mRNA stability and/or translation. Involved in various cellular processes, such as mRNA storage into stress granules, apoptosis, lipid deposition, interferon response, glial cell fate and development. Binds to the 5'-NACUAAY-N(1,20)-UAAY-3' RNA core sequence. Acts as a mRNA modification reader that specifically recognizes and binds mRNA transcripts modified by internal N(7)-methylguanine (m7G). Promotes the formation of circular RNAs (circRNAs) during the epithelial to mesenchymal transition and in cardiomyocytes: acts by binding to sites flanking circRNA-forming exons. CircRNAs are produced by back-splicing circularization of pre-mRNAs. Plays a central role in myelinization via 3 distinct mechanisms. First, acts by protecting and promoting stability of target mRNAs such as MBP, SIRT2 and CDKN1B, which promotes oligodendrocyte differentiation. Second, participates in mRNA transport by regulating the nuclear export of MBP mRNA. Finally, indirectly regulates mRNA splicing of MAG pre-mRNA during oligodendrocyte differentiation by acting as a negative regulator of MAG exon 12 alternative splicing: acts by binding to HNRNPA1 mRNA splicing factor, preventing its translation. Involved in microglia differentiation and remyelination by regulating microexon alternative splicing of the Rho GTPase pathway. Involved in macrophage differentiation: promotes monocyte differentiation by regulating pre-mRNA splicing in naive peripheral blood monocytes. Acts as an important regulator of muscle development: required for the contractile function of cardiomyocytes by regulating alternative splicing of cardiomyocyte transcripts. Acts as a negative regulator of thermogenesis by decreasing stability, nuclear export and translation of mRNAs encoding PPARGC1A and UCP1. Also required for visceral endoderm function and blood vessel development. May also play a role in smooth muscle development. In addition to its RNA-binding activity, also acts as a nuclear transcription coactivator for SREBF2/SREBP2. The polypeptide is KH domain-containing RNA-binding protein QKI (Rattus norvegicus (Rat)).